A 151-amino-acid chain; its full sequence is NADPH-dependent 7-cyano-7-deazaguanine reductase (151 aa).

The Thioimide intermediate role is filled by C51. The Proton donor role is filled by D58. Residues 73–75 and 92–93 each bind substrate; these read VES and HE.

The protein belongs to the GTP cyclohydrolase I family. QueF type 1 subfamily.

It is found in the cytoplasm. It catalyses the reaction 7-aminomethyl-7-carbaguanine + 2 NADP(+) = 7-cyano-7-deazaguanine + 2 NADPH + 3 H(+). It functions in the pathway tRNA modification; tRNA-queuosine biosynthesis. Its function is as follows. Catalyzes the NADPH-dependent reduction of 7-cyano-7-deazaguanine (preQ0) to 7-aminomethyl-7-deazaguanine (preQ1). The sequence is that of NADPH-dependent 7-cyano-7-deazaguanine reductase from Bacteroides fragilis (strain YCH46).